Consider the following 729-residue polypeptide: ATP-dependent RNA helicase DHX15 homolog (729 aa).

The interval 1–25 (MSKRRIEVGETYGSKAKKDPEASSS) is disordered. One can recognise a Helicase ATP-binding domain in the interval 82–246 (MRLLSLHQCI…FDNAPLMKVP (165 aa)). 95–102 (GETGSGKT) contributes to the ATP binding site. Residues 193-196 (DEAH) carry the DEAH box motif. Positions 271-451 (TVIQIHMCEE…TVVLQLKKLG (181 aa)) constitute a Helicase C-terminal domain.

Belongs to the DEAD box helicase family. DEAH subfamily. DDX15/PRP43 sub-subfamily.

The enzyme catalyses ATP + H2O = ADP + phosphate + H(+). Its function is as follows. RNA helicase involved in mRNA processing and antiviral innate immunity. Acts as an activator of the p38 MAPK cascade. The protein is ATP-dependent RNA helicase DHX15 homolog of Drosophila melanogaster (Fruit fly).